Consider the following 858-residue polypeptide: Toll-like receptor 5 (858 aa).

The N-terminal stretch at 1–20 (MGDHLDLLLGVVLMAGPVFG) is a signal peptide. The Extracellular segment spans residues 21–639 (IPSCSFDGRI…DEEEVLKSLK (619 aa)). Residues asparagine 37 and asparagine 46 are each glycosylated (N-linked (GlcNAc...) asparagine). LRR repeat units follow at residues 45-68 (LNTTERLLLSFNYIRTVTASSFPF), 71-93 (QLQLLELGSQYTPLTIDKEAFRN), 95-117 (PNLRILDLGSSKIYFLHPDAFQG), 120-143 (HLFELRLYFCGLSDAVLKDGYFRN), 146-166 (ALTRLDLSKNQIRSLYLHPSF), 171-192 (SLKSIDFSSNQIFLVCEHELEP), 197-211 (TLSFFSLAANSLYSR), 214-229 (VDWGKCMNPFRNMVLE), and 234-235 (SG). A glycan (N-linked (GlcNAc...) asparagine) is linked at asparagine 245. LRR repeat units lie at residues 260–284 (LAHHIMGAGFGFHNIKDPDQNTFAG), 289–301 (SVRHLDLSHGFVF), 313–334 (DLKVLNLAYNKINKIADEAFYG), 337–355 (NLQVLNLSYNLLGELYSSN), 385–401 (KLQTLDLRDNALTTIHF), 412–431 (GNKLVTLPKINLTANLIHLS), 449–470 (HLQILILNQNRFSSCSGDQTPS), 474–495 (SLEQLFLGENMLQLAWETELCW), 503–524 (HLQVLYLNHNYLNSLPPGVFSH), 527–546 (ALRGLSLNSNRLTVLSHNDL), and 549–567 (NLEILDISRNQLLAPNPDV). The N-linked (GlcNAc...) asparagine glycan is linked to asparagine 342. N-linked (GlcNAc...) asparagine glycosylation occurs at asparagine 422. Residues 579-631 (NKFICECELSTFINWLNHTNVTIAGPPADIYCVYPDSFSGVSLFSLSTEGCDE) form the LRRCT domain. Cystine bridges form between cysteine 583–cysteine 610 and cysteine 585–cysteine 629. Asparagine 595 and asparagine 598 each carry an N-linked (GlcNAc...) asparagine glycan. The chain crosses the membrane as a helical span at residues 640–660 (FSLFIVCTVTLTLFLMTILTV). Over 661 to 858 (TKFRGFCFIC…IPLQTVATIS (198 aa)) the chain is Cytoplasmic. One can recognise a TIR domain in the interval 691 to 836 (YKYDAYLCFS…WFLHKLSQQI (146 aa)). Tyrosine 798 carries the phosphotyrosine modification. Serine 805 is modified (phosphoserine; by PKD/PRKD1).

It belongs to the Toll-like receptor family. Homodimer. Interacts with MYD88 (via TIR domain). Interacts with TICAM1 (via TIR domain). Interacts with UNC93B1; this interaction is essential for proper TLR5 localization to the plasma membrane. Phosphorylated at Ser-805 by PKD/PRKD1; phosphorylation induces the production of inflammatory cytokines. Post-translationally, phosphorylated at Tyr-798 upon flagellin binding; required for signaling. As to expression, highly expressed on the basolateral surface of intestinal epithelia. Expressed also in other cells such as lung epithelial cells.

It is found in the cell membrane. Functionally, pattern recognition receptor (PRR) located on the cell surface that participates in the activation of innate immunity and inflammatory response. Recognizes small molecular motifs named pathogen-associated molecular pattern (PAMPs) expressed by pathogens and microbe-associated molecular patterns (MAMPs) usually expressed by resident microbiota. Upon ligand binding such as bacterial flagellins, recruits intracellular adapter proteins MYD88 and TRIF leading to NF-kappa-B activation, cytokine secretion and induction of the inflammatory response. Plays thereby an important role in the relationship between the intestinal epithelium and enteric microbes and contributes to the gut microbiota composition throughout life. The chain is Toll-like receptor 5 (TLR5) from Homo sapiens (Human).